The chain runs to 2364 residues: Cytotoxin-L (2364 aa).

Positions 1 to 91 (MNLVNKAQLQ…EVLELKNNSL (91 aa)) are four-helical bundle. One can recognise a GT44 domain in the interval 96–468 (KNLHFIWIGG…APDVRSTINL (373 aa)). The segment at 96-468 (KNLHFIWIGG…APDVRSTINL (373 aa)) is glucosyltransferase region. Residues 101 to 103 (IWI), asparagine 139, 265 to 270 (LAAASD), and 286 to 288 (DVD) contribute to the UDP-alpha-D-glucose site. 3 residues coordinate Mg(2+): aspartate 288, glutamate 515, and serine 518. 518–520 (SLW) serves as a coordination point for UDP-alpha-D-glucose. Residues 544–799 (GEDDNLDFAQ…KSKYLHELST (256 aa)) form an autoprocessing region region. Zn(2+)-binding residues include glutamate 545 and aspartate 546. Residues 567 to 774 (LSSMKTRNKE…EESIIKDISS (208 aa)) form the Peptidase C80 domain. Residues tyrosine 577, lysine 600, and lysine 647 each coordinate 1D-myo-inositol hexakisphosphate. Histidine 653 provides a ligand contact to Zn(2+). The For protease activity role is filled by histidine 653. Cysteine 698 functions as the Nucleophile; for protease activity in the catalytic mechanism. A Zn(2+)-binding site is contributed by histidine 757. 1D-myo-inositol hexakisphosphate-binding residues include lysine 764, lysine 775, and lysine 792. The segment at 800 to 1500 (LLQEIRNNAN…ESIIRNIYMP (701 aa)) is translocation region. Interaction with host SEMA6A and SEMA6B regions lie at residues 1433–1438 (CMKLIE), 1466–1471 (DNETKY), 1484–1495 (FTAEFSNESIIR), 1504–1511 (NLFIYSSK), and 1596–1601 (YNNLDP). 20 Cell wall-binding repeats span residues 1813–1832 (EFGL…FGNM), 1833–1852 (VSGL…PKNN), 1854–1873 (ITGF…TKSG), 1876–1895 (SIGE…QGIL), 1926–1945 (FIGK…NYRA), 1946–1965 (AVEW…KTGE), 1967–1986 (LKGL…NGIM), 1987–2006 (QTGF…DGVM), 2007–2026 (QVGY…NGER), 2057–2076 (YNGI…SNTA), 2077–2097 (VVGW…NTAE), 2099–2118 (CIGL…NGIR), 2119–2138 (QLGF…SGKI), 2139–2158 (ELGY…SGLV), 2209–2224 (ETGW…YFDP), 2227–2249 (KKAY…NGIM), 2250–2269 (RTGL…DGKM), 2270–2289 (QFGY…DGKM), 2320–2339 (YTGW…EYIA), and 2340–2359 (ATGS…DTAE). Positions 1835–2364 (GLIYINDSLY…PDTAELVVSE (530 aa)) are receptor-binding (CROPS) region.

This sequence belongs to the clostridial glucosylating toxin (LCGT) family. In terms of assembly, homomultimer; forms an inactive homomultimer at pH 8, which dissociates at pH 4, leading to cytotoxicity. Interacts with host SEMA6A; interaction promotes toxin entry into host cell. Interacts with host SEMA6B; interaction promotes toxin entry into host cell. The cofactor is Zn(2+). Mn(2+) is required as a cofactor. Mg(2+) serves as cofactor. In terms of processing, undergoes autocatalytic cleavage to release the N-terminal part (Glucosyltransferase TcsL), which constitutes the active part of the toxin, in the host cytosol. 1D-myo-inositol hexakisphosphate-binding (InsP6) activates the peptidase C80 domain and promotes autoprocessing.

The protein localises to the secreted. It is found in the host endosome membrane. The protein resides in the host cytoplasm. It localises to the host cytosol. Its subcellular location is the host cell membrane. It catalyses the reaction L-threonyl-[protein] + UDP-alpha-D-glucose = 3-O-(alpha-D-glucosyl)-L-threonyl-[protein] + UDP + H(+). Protease activity is activated upon binding to 1D-myo-inositol hexakisphosphate (InsP6), which induces conformational reorganization. Functionally, precursor of a cytotoxin that targets the vascular endothelium, inducing an anti-inflammatory effect and resulting in lethal toxic shock syndrome. TcsL constitutes the main toxin that mediates the pathology of P.sordellii infection, an anaerobic Gram-positive bacterium found in soil and in the gastrointestinal and vaginal tracts of animals and humans; although the majority of carriers are asymptomatic, pathogenic P.sordellii infections arise rapidly and are highly lethal. This form constitutes the precursor of the toxin: it enters into host cells and mediates autoprocessing to release the active toxin (Glucosyltransferase TcsL) into the host cytosol. Targets vascular endothelium by binding to the semaphorin proteins SEMA6A and SEMA6B, and enters host cells via clathrin-mediated endocytosis. Once entered into host cells, acidification in the endosome promotes the membrane insertion of the translocation region and formation of a pore, leading to translocation of the GT44 and peptidase C80 domains across the endosomal membrane. This activates the peptidase C80 domain and autocatalytic processing, releasing the N-terminal part (Glucosyltransferase TcsL), which constitutes the active part of the toxin, in the cytosol. In terms of biological role, active form of the toxin, which is released into the host cytosol following autoprocessing and inactivates small GTPases. Acts by mediating monoglucosylation of small GTPases of the Ras (H-Ras/HRAS, K-Ras/KRAS and N-Ras/NRAS) family in host cells at the conserved threonine residue located in the switch I region ('Thr-37/35'), using UDP-alpha-D-glucose as the sugar donor. Also able to catalyze monoglucosylation of some members of the Rho family (Rac1 and Rap2A), but with less efficiency than with Ras proteins. Monoglucosylation of host small GTPases completely prevents the recognition of the downstream effector, blocking the GTPases in their inactive form and leading to apoptosis. Induces an anti-inflammatory effect, mainly by inactivating Ras proteins which results in blockage of the cell cycle and killing of immune cells. The absence or moderate local inflammatory response allows C.sordellii spreading in deep tissues, production of toxin which is released in the general circulation and causes a toxic shock syndrome. This chain is Cytotoxin-L, found in Paraclostridium sordellii (strain ATCC 9714 / DSM 2141 / JCM 3814 / LMG 15708 / NCIMB 10717 / 211) (Clostridium sordellii).